A 398-amino-acid polypeptide reads, in one-letter code: Carbamoyl phosphate synthase small chain (398 aa).

A CPSase region spans residues 1 to 204 (MSPLLPSFPP…PAYGTLDTGK (204 aa)). Residues Ser-53, Gly-256, and Gly-258 each coordinate L-glutamine. In terms of domain architecture, Glutamine amidotransferase type-1 spans 208–395 (KVVAYDFGVK…VELMNAASKK (188 aa)). The Nucleophile role is filled by Cys-284. The L-glutamine site is built by Leu-285, Gln-288, Asn-326, Gly-328, and Phe-329. Active-site residues include His-368 and Glu-370.

The protein belongs to the CarA family. As to quaternary structure, composed of two chains; the small (or glutamine) chain promotes the hydrolysis of glutamine to ammonia, which is used by the large (or ammonia) chain to synthesize carbamoyl phosphate. Tetramer of heterodimers (alpha,beta)4.

It catalyses the reaction hydrogencarbonate + L-glutamine + 2 ATP + H2O = carbamoyl phosphate + L-glutamate + 2 ADP + phosphate + 2 H(+). The enzyme catalyses L-glutamine + H2O = L-glutamate + NH4(+). The protein operates within amino-acid biosynthesis; L-arginine biosynthesis; carbamoyl phosphate from bicarbonate: step 1/1. It participates in pyrimidine metabolism; UMP biosynthesis via de novo pathway; (S)-dihydroorotate from bicarbonate: step 1/3. Functionally, small subunit of the glutamine-dependent carbamoyl phosphate synthetase (CPSase). CPSase catalyzes the formation of carbamoyl phosphate from the ammonia moiety of glutamine, carbonate, and phosphate donated by ATP, constituting the first step of 2 biosynthetic pathways, one leading to arginine and/or urea and the other to pyrimidine nucleotides. The small subunit (glutamine amidotransferase) binds and cleaves glutamine to supply the large subunit with the substrate ammonia. The sequence is that of Carbamoyl phosphate synthase small chain from Polynucleobacter necessarius subsp. necessarius (strain STIR1).